Reading from the N-terminus, the 163-residue chain is Inorganic pyrophosphatase (163 aa).

Substrate contacts are provided by Lys-21, Arg-35, and Tyr-47. Residues Asp-57, Asp-62, and Asp-94 each coordinate Mg(2+). Position 131 (Tyr-131) interacts with substrate.

This sequence belongs to the PPase family. As to quaternary structure, homohexamer. Mg(2+) serves as cofactor.

Its subcellular location is the cytoplasm. The catalysed reaction is diphosphate + H2O = 2 phosphate + H(+). Its function is as follows. Catalyzes the hydrolysis of inorganic pyrophosphate (PPi) forming two phosphate ions. This is Inorganic pyrophosphatase from Halalkalibacterium halodurans (strain ATCC BAA-125 / DSM 18197 / FERM 7344 / JCM 9153 / C-125) (Bacillus halodurans).